A 269-amino-acid chain; its full sequence is MKIETVILDWAGTAVDFGCFAPVNVFLTIFEDAGVTVTLEEARKPMGMLKIDHIRTMLEMPRINEEWKRVHRQHFTEEDVHLLYNQFESKLMESLATYTDPIQHVTATVQQLREAGIRFGSTTGYTDFMMEVVTKQAATKGYQPDFLVTPTQVSDKGRPYPYMIFRNMEALGAKSTKQVVKVGDTTSDIKEALNAGVWAVGVIIGSSEMGLSEEEFLALTAEEQQQAIEKTKRIFEMTGAHYTIETMKDLPILINTINEELANETNDRN.

Asp9 serves as the catalytic Nucleophile. Asp9 and Ala11 together coordinate Mg(2+). Residue Lys50 is the Schiff-base intermediate with substrate of the active site. Asp184 is a binding site for Mg(2+).

Belongs to the HAD-like hydrolase superfamily. PhnX family. In terms of assembly, homodimer. Mg(2+) serves as cofactor.

It carries out the reaction phosphonoacetaldehyde + H2O = acetaldehyde + phosphate + H(+). In terms of biological role, involved in phosphonate degradation. This chain is Phosphonoacetaldehyde hydrolase, found in Lysinibacillus sphaericus (strain C3-41).